Here is a 74-residue protein sequence, read N- to C-terminus: UPF0154 protein LSL_0542 (74 aa).

The helical transmembrane segment at 5–25 threads the bilayer; the sequence is IWVLIVIIAAVLGFVGGFFAA.

The protein belongs to the UPF0154 family.

The protein resides in the cell membrane. In Ligilactobacillus salivarius (strain UCC118) (Lactobacillus salivarius), this protein is UPF0154 protein LSL_0542.